Consider the following 542-residue polypeptide: Calcium-dependent protein kinase 15 (542 aa).

Residues 1–73 are disordered; the sequence is MGARASRHRQ…QAPQQAAAED (73 aa). The N-myristoyl glycine moiety is linked to residue glycine 2. The segment covering 12–21 has biased composition (low complexity); that stretch reads PDQSQSQSPS. Over residues 22 to 40 the composition is skewed to basic residues; the sequence is PHHKHHHHHQTTRAPKPKP. Over residues 41-60 the composition is skewed to pro residues; the sequence is KPQPPPPQQPRSQPPPPPRH. Low complexity predominate over residues 61-71; it reads QPQQAPQQAAA. The region spanning 90–348 is the Protein kinase domain; that stretch reads YTFGRELGRG…AAEILNHPWI (259 aa). ATP is bound by residues 96 to 104 and lysine 119; that span reads LGRGQFGVT. Catalysis depends on aspartate 214, which acts as the Proton acceptor. The interval 354–384 is autoinhibitory domain; the sequence is APDKPLDITVISRMKQFRAMNKLKKVALKVV. 4 consecutive EF-hand domains span residues 391 to 426, 427 to 462, 463 to 497, and 498 to 533; these read EEIV…LGTK, ISES…MNRL, EKED…KYDM, and GDEA…NSPE. Aspartate 404, aspartate 406, serine 408, threonine 410, glutamate 415, aspartate 440, aspartate 442, asparagine 444, serine 446, glutamate 451, aspartate 476, aspartate 478, serine 480, glutamate 487, aspartate 511, aspartate 513, aspartate 515, arginine 517, and glutamate 522 together coordinate Ca(2+).

This sequence belongs to the protein kinase superfamily. Ser/Thr protein kinase family. CDPK subfamily.

The protein localises to the membrane. It carries out the reaction L-seryl-[protein] + ATP = O-phospho-L-seryl-[protein] + ADP + H(+). It catalyses the reaction L-threonyl-[protein] + ATP = O-phospho-L-threonyl-[protein] + ADP + H(+). With respect to regulation, activated by calcium. Autophosphorylation may play an important role in the regulation of the kinase activity. May play a role in signal transduction pathways that involve calcium as a second messenger. This Oryza sativa subsp. japonica (Rice) protein is Calcium-dependent protein kinase 15.